Reading from the N-terminus, the 387-residue chain is GTP-binding protein 10 (387 aa).

The region spanning 13–148 is the Obg domain; sequence GNFIDKLRLF…RIIHLDLKLI (136 aa). The OBG-type G domain occupies 149–344; sequence ADVGLVGFPN…LKNCIRKSLD (196 aa). GTP-binding positions include 155–162, 202–206, and 278–281; these read GFPNAGKS, DLPGL, and NKMD.

The protein belongs to the TRAFAC class OBG-HflX-like GTPase superfamily. OBG GTPase family.

The protein resides in the nucleus. It is found in the nucleolus. It localises to the chromosome. May be involved in the ribosome maturation process. Complements an ObgE(CgtA) function in E.coli ribosome maturation. Plays a role of GTPase in vitro. When missing, disorganization of the nucleolar architecture is observed. The protein is GTP-binding protein 10 (GTPBP10) of Homo sapiens (Human).